Reading from the N-terminus, the 296-residue chain is Low affinity immunoglobulin gamma Fc region receptor II (296 aa).

The N-terminal stretch at 1–42 is a signal peptide; sequence MGIPSFLAFPAARRNRAHCTPWHPWGHMLLWTALLFLAPVSG. At 43 to 225 the chain is on the extracellular side; sequence KPDLPKAVVT…SSSSGPSSMT (183 aa). Ig-like C2-type domains follow at residues 47 to 129 and 130 to 212; these read PKAV…DVIS and DWLL…VNIT. 2 disulfides stabilise this stretch: C70-C112 and C151-C195. N-linked (GlcNAc...) asparagine glycosylation is found at N79, N86, N105, N179, N186, and N210. A helical membrane pass occupies residues 226-246; it reads AVAIGTCFAAVAIVAAIITWF. The Cytoplasmic portion of the chain corresponds to 247 to 296; sequence RLRRKPISAGLTDAENDAARTEAENTVTYSLLSHPDVAEEDSESDYQKRL. Positions 273-278 match the ITIM motif motif; that stretch reads VTYSLL. A Phosphotyrosine; by SRC-type Tyr-kinases modification is found at Y275. A Phosphoserine modification is found at S288. Y292 is subject to Phosphotyrosine.

Interacts with FGR and LYN. In terms of processing, phosphorylated by SRC-type Tyr-kinases such as LYN, BLK, FYN and SYK. As to expression, higher expression is found in macrophages than in neutrophils.

The protein resides in the cell membrane. Binds to the Fc region of immunoglobulins gamma. Low affinity receptor. This Bos taurus (Bovine) protein is Low affinity immunoglobulin gamma Fc region receptor II (FCGR2).